A 599-amino-acid polypeptide reads, in one-letter code: Elongation factor 4 (599 aa).

A tr-type G domain is found at 5-187; that stretch reads NRIRNFSIVA…AIVTRLPAPK (183 aa). GTP-binding positions include 17–22 and 134–137; these read DHGKST and NKVD.

It belongs to the TRAFAC class translation factor GTPase superfamily. Classic translation factor GTPase family. LepA subfamily.

The protein resides in the cell inner membrane. The catalysed reaction is GTP + H2O = GDP + phosphate + H(+). Functionally, required for accurate and efficient protein synthesis under certain stress conditions. May act as a fidelity factor of the translation reaction, by catalyzing a one-codon backward translocation of tRNAs on improperly translocated ribosomes. Back-translocation proceeds from a post-translocation (POST) complex to a pre-translocation (PRE) complex, thus giving elongation factor G a second chance to translocate the tRNAs correctly. Binds to ribosomes in a GTP-dependent manner. The sequence is that of Elongation factor 4 from Jannaschia sp. (strain CCS1).